We begin with the raw amino-acid sequence, 607 residues long: Condensin-2 complex subunit H2 (607 aa).

Thr19 is subject to Phosphothreonine. Phosphoserine is present on residues Ser95, Ser231, Ser235, and Ser252. 2 disordered regions span residues 211 to 312 (YPMS…WQSL) and 325 to 347 (KGKP…KRKG). Acidic residues predominate over residues 254–263 (GEEDAEDGAE). At Ser494 the chain carries Phosphoserine.

This sequence belongs to the CND2 H2 (condensin-2 subunit 2) family. In terms of assembly, component of the condensin-2 complex, which contains the SMC2 and SMC4 heterodimer, and three non SMC subunits, NCAPG2, NCAPH2 and NCAPD3 that probably regulate the complex.

It is found in the nucleus. In terms of biological role, regulatory subunit of the condensin-2 complex, a complex that seems to provide chromosomes with an additional level of organization and rigidity and in establishing mitotic chromosome architecture. May promote the resolution of double-strand DNA catenanes (intertwines) between sister chromatids. Condensin-mediated compaction likely increases tension in catenated sister chromatids, providing directionality for type II topoisomerase-mediated strand exchanges toward chromatid decatenation. Required for decatenation of chromatin bridges at anaphase. Early in neurogenesis, may play an essential role to ensure accurate mitotic chromosome condensation in neuron stem cells, ultimately affecting neuron pool and cortex size. Seems to have lineage-specific role in T-cell development. This chain is Condensin-2 complex subunit H2, found in Mus musculus (Mouse).